We begin with the raw amino-acid sequence, 712 residues long: MACTGPSLPSAFDILGAAGQDKLLYLKHKLKTPRPGCQGQDLLHAMVLLKLGQETEARISLEALKADAVARLVARQWAGVDSTEDPEEPPDVSWAVARLYHLLAEEKLCPASLRDVAYQEAVRTLSSRDDHRLGELQDEARNRCGWDIAGDPGSIRTLQSNLGCLPPSSALPSGTRSLPRPIDGVSDWSQGCSLRSTGSPASLASNLEISQSPTMPFLSLHRSPHGPSKLCDDPQASLVPEPVPGGCQEPEEMSWPPSGEIASPPELPSSPPPGLPEVAPDATSTGLPDTPAAPETSTNYPVECTEGSAGPQSLPLPILEPVKNPCSVKDQTPLQLSVEDTTSPNTKPCPPTPTTPETSPPPPPPPPSSTPCSAHLTPSSLFPSSLESSSEQKFYNFVILHARADEHIALRVREKLEALGVPDGATFCEDFQVPGRGELSCLQDAIDHSAFIILLLTSNFDCRLSLHQVNQAMMSNLTRQGSPDCVIPFLPLESSPAQLSSDTASLLSGLVRLDEHSQIFARKVANTFKPHRLQARKAMWRKEQDTRALREQSQHLDGERMQAAALNAAYSAYLQSYLSYQAQMEQLQVAFGSHMSFGTGAPYGARMPFGGQVPLGAPPPFPTWPGCPQPPPLHAWQAGTPPPPSPQPAAFPQSLPFPQSPAFPTASPAPPQSPGLQPLIIHHAQMVQLGLNNHMWNQRGSQAPEDKTQEAE.

Residues 1–153 form a TRIF-NTD region; that stretch reads MACTGPSLPS…CGWDIAGDPG (153 aa). Residues 84-91 carry the TRAF6-binding motif; the sequence is EDPEEPPD. The short motif at 207–210 is the pLxIS motif element; that stretch reads LEIS. At Ser210 the chain carries Phosphoserine; by TBK1. Disordered regions lie at residues 216-316 and 336-384; these read PFLS…SLPL and LSVE…LFPS. Residue Lys229 forms a Glycyl lysine isopeptide (Lys-Gly) (interchain with G-Cter in ubiquitin) linkage. The TRAF6-binding signature appears at 248 to 255; it reads QEPEEMSW. The segment covering 265-275 has biased composition (pro residues); sequence PELPSSPPPGL. A TRAF6-binding motif is present at residues 299–309; sequence NYPVECTEGSA. The segment covering 347–369 has biased composition (pro residues); sequence KPCPPTPTTPETSPPPPPPPPSS. Residues 393–553 enclose the TIR domain; it reads KFYNFVILHA…QDTRALREQS (161 aa). Residues 512–712 are sufficient to induce apoptosis; it reads RLDEHSQIFA…APEDKTQEAE (201 aa). 2 stretches are compositionally biased toward pro residues: residues 620-633 and 640-649; these read PFPT…PPPL and TPPPPSPQPA. The disordered stretch occupies residues 620–677; that stretch reads PFPTWPGCPQPPPLHAWQAGTPPPPSPQPAAFPQSLPFPQSPAFPTASPAPPQSPGLQ. Residues 650–666 are compositionally biased toward low complexity; sequence AFPQSLPFPQSPAFPTA.

Homodimer. Found in a multi-helicase-TICAM1 complex at least composed of DHX36, DDX1, DDX21 and TICAM1; this complex exists in resting cells with or without poly(I:C) RNA ligand stimulation. Interacts (via TIR domain) with DDX21 (via C-terminus). Interacts (via TIR domain) with DHX36 (via C-terminus). Interacts with AZI2 and IRF7. Interacts with TICAM2 in TLR4 recruitment. Interaction with PIAS4 inhibits the TICAM1-induced NF-kappa-B, IRF and IFNB1 activation. Interacts with IKBKB and IKBKE. Interaction with SARM1 blocks TICAM1-dependent transcription factor activation. Interacts with TRAF3. Interacts (when phosphorylated) with IRF3; following activation and phosphorylation on the pLxIS motif by TBK1, recruits IRF3. Interacts with TBK1, TRAF6 and RIPK1 and these interactions are enhanced in the presence of WDFY1. Interacts with TRAFD1. Interacts with UBQLN1 (via UBA domain). Interacts with TLR4. Interacts with WDFY1 in response to poly(I:C). Interacts (via the TIR domain) with TLR3 in response to poly(I:C) and this interaction is enhanced in the presence of WDFY1. Interacts with TRIM56. Component of a multi-helicase-TICAM1 complex that acts as a cytoplasmic sensor of viral double-stranded RNA (dsRNA) and plays a role in the activation of a cascade of antiviral responses including the induction of pro-inflammatory cytokines. Interacts (via the TIR domain) with TLR5. Interacts with TRIM8. Interacts with TAX1BP1 and TRIM32; these interactions target TICAM1 to TAX1BP1-mediated selective autophagic degradation. Interacts with DDX50. As to quaternary structure, (Microbial infection) Interacts with hepatitis C virus (HCV) NS3/4A protease; this interaction leads to TICAM1 cleavage, thereby disrupting TLR3 signaling and preventing the establishment of an antiviral state. In terms of assembly, (Microbial infection) Interacts with Seneca Valley virus protease 3C; this interaction allows the cleavage of TICAM1/TRIF and subsequent suppression of host innate immunity. (Microbial infection) Interacts (via C-terminus) with coxsackievirus B3 (CVB3) protease 3C. Post-translationally, phosphorylated by TBK1. Following activation, phosphorylated by TBK1 at Ser-210 in the pLxIS motif. The phosphorylated pLxIS motif constitutes an IRF3-binding motif, leading to recruitment of the transcription factor IRF3 to induce type-I interferons and other cytokines. Polyubiquitinated at Lys-229 by TRIM38 with 'Lys-48'-linked chains, leading to proteasomal degradation. Polyubiquitinated with 'Lys-6'- and 'Lys-33'-linked chains in a TRIM8-dependent manner; ubiquitination disrupts the interaction with TBK1 and subsequent interferon production. In terms of processing, (Microbial infection) Cleaved and degraded by hepatitis A virus (HAV) protein 3CD allowing the virus to disrupt host TLR3 signaling. Post-translationally, (Microbial infection) Cleaved by CVB3 protease 3C allowing the virus to disrupt host TLR3 signaling. (Microbial infection) Cleaved by Seneca Valley virus protease 3C allowing the virus to disrupt host TLR3 signaling. In terms of processing, (Microbial infection) Cleaved by protease 3C of human enterovirus D68 (EV68) allowing the virus to disrupt host TLR3 signaling. Post-translationally, (Microbial infection) Cleaved by HCV protease NS3/4A, thereby disrupting TLR3 signaling and preventing the establishment of an antiviral state. As to expression, ubiquitously expressed but with higher levels in liver.

It is found in the cytoplasmic vesicle. The protein resides in the autophagosome. It localises to the cytoplasm. The protein localises to the cytosol. Its subcellular location is the mitochondrion. In terms of biological role, involved in innate immunity against invading pathogens. Adapter used by TLR3, TLR4 (through TICAM2) and TLR5 to mediate NF-kappa-B and interferon-regulatory factor (IRF) activation, and to induce apoptosis. Ligand binding to these receptors results in TRIF recruitment through its TIR domain. Distinct protein-interaction motifs allow recruitment of the effector proteins TBK1, TRAF6 and RIPK1, which in turn, lead to the activation of transcription factors IRF3 and IRF7, NF-kappa-B and FADD respectively. Phosphorylation by TBK1 on the pLxIS motif leads to recruitment and subsequent activation of the transcription factor IRF3 to induce expression of type I interferon and exert a potent immunity against invading pathogens. Component of a multi-helicase-TICAM1 complex that acts as a cytoplasmic sensor of viral double-stranded RNA (dsRNA) and plays a role in the activation of a cascade of antiviral responses including the induction of pro-inflammatory cytokines. The sequence is that of TIR domain-containing adapter molecule 1 (TICAM1) from Homo sapiens (Human).